The sequence spans 230 residues: Large ribosomal subunit protein uL1c (230 aa).

This sequence belongs to the universal ribosomal protein uL1 family. As to quaternary structure, part of the 50S ribosomal subunit.

Its subcellular location is the plastid. The protein resides in the chloroplast. Binds directly to 23S rRNA. Might be involved in E site tRNA release (Potential). The polypeptide is Large ribosomal subunit protein uL1c (rpl1) (Trieres chinensis (Marine centric diatom)).